We begin with the raw amino-acid sequence, 225 residues long: Orotidine 5'-phosphate decarboxylase (225 aa).

Residues Asp9, Lys31, 58–67 (DLKLHDIPNT), Thr115, Arg176, Gln184, Gly204, and Arg205 contribute to the substrate site. The active-site Proton donor is the Lys60.

It belongs to the OMP decarboxylase family. Type 1 subfamily. In terms of assembly, homodimer.

It catalyses the reaction orotidine 5'-phosphate + H(+) = UMP + CO2. It functions in the pathway pyrimidine metabolism; UMP biosynthesis via de novo pathway; UMP from orotate: step 2/2. Functionally, catalyzes the decarboxylation of orotidine 5'-monophosphate (OMP) to uridine 5'-monophosphate (UMP). This Wolbachia sp. subsp. Brugia malayi (strain TRS) protein is Orotidine 5'-phosphate decarboxylase.